A 712-amino-acid polypeptide reads, in one-letter code: Phosphoribosylformylglycinamidine synthase subunit PurL (712 aa).

The active site involves H32. An ATP-binding site is contributed by Y35. Position 76 (E76) interacts with Mg(2+). Residues 77–80 (SHNH) and R99 each bind substrate. H78 acts as the Proton acceptor in catalysis. Position 100 (D100) interacts with Mg(2+). Residue Q223 participates in substrate binding. Position 251 (D251) interacts with Mg(2+). 295–297 (ESQ) contacts substrate. 2 residues coordinate ATP: D470 and G507. A Mg(2+)-binding site is contributed by N508. S510 is a substrate binding site.

Belongs to the FGAMS family. In terms of assembly, monomer. Part of the FGAM synthase complex composed of 1 PurL, 1 PurQ and 2 PurS subunits.

The protein resides in the cytoplasm. It carries out the reaction N(2)-formyl-N(1)-(5-phospho-beta-D-ribosyl)glycinamide + L-glutamine + ATP + H2O = 2-formamido-N(1)-(5-O-phospho-beta-D-ribosyl)acetamidine + L-glutamate + ADP + phosphate + H(+). The protein operates within purine metabolism; IMP biosynthesis via de novo pathway; 5-amino-1-(5-phospho-D-ribosyl)imidazole from N(2)-formyl-N(1)-(5-phospho-D-ribosyl)glycinamide: step 1/2. Its function is as follows. Part of the phosphoribosylformylglycinamidine synthase complex involved in the purines biosynthetic pathway. Catalyzes the ATP-dependent conversion of formylglycinamide ribonucleotide (FGAR) and glutamine to yield formylglycinamidine ribonucleotide (FGAM) and glutamate. The FGAM synthase complex is composed of three subunits. PurQ produces an ammonia molecule by converting glutamine to glutamate. PurL transfers the ammonia molecule to FGAR to form FGAM in an ATP-dependent manner. PurS interacts with PurQ and PurL and is thought to assist in the transfer of the ammonia molecule from PurQ to PurL. The protein is Phosphoribosylformylglycinamidine synthase subunit PurL of Thermococcus gammatolerans (strain DSM 15229 / JCM 11827 / EJ3).